The sequence spans 701 residues: Glycine--tRNA ligase beta subunit (701 aa).

Belongs to the class-II aminoacyl-tRNA synthetase family. In terms of assembly, tetramer of two alpha and two beta subunits.

The protein resides in the cytoplasm. It carries out the reaction tRNA(Gly) + glycine + ATP = glycyl-tRNA(Gly) + AMP + diphosphate. The chain is Glycine--tRNA ligase beta subunit from Anaeromyxobacter dehalogenans (strain 2CP-1 / ATCC BAA-258).